Consider the following 828-residue polypeptide: Glycerol-3-phosphate acyltransferase 1, mitochondrial (828 aa).

The Cytoplasmic segment spans residues 1–87 (MDESALTLGT…FFNPSIPSLG (87 aa)). The segment at 80–120 (NPSIPSLGLRNVIYINETHTRHRGWLARRLSYVLFIQERDV) is important for mitochondrial localization. The stretch at 88 to 118 (LRNVIYINETHTRHRGWLARRLSYVLFIQER) is an intramembrane region. Over 119-828 (DVHKGMFATN…LEYILSFVVL (710 aa)) the chain is Cytoplasmic. The HXXXXD motif motif lies at 230-235 (HRSHID). 5 residues coordinate CoA: R278, R279, K288, R293, and R328. Position 380 is a phosphoserine (S380). Residues 435–455 (SRPSDAADEGRDTSINESRNA) are disordered. Over residues 442-455 (DEGRDTSINESRNA) the composition is skewed to basic and acidic residues. R462 contributes to the CoA binding site. Phosphoserine is present on residues S688 and S695. Residues K780 and K784 each carry the N6-acetyllysine modification.

This sequence belongs to the GPAT/DAPAT family.

The protein resides in the mitochondrion outer membrane. It catalyses the reaction sn-glycerol 3-phosphate + an acyl-CoA = a 1-acyl-sn-glycero-3-phosphate + CoA. The enzyme catalyses (9Z,12Z)-octadecadienoyl-CoA + sn-glycerol 3-phosphate = 1-(9Z,12Z)-octadecadienoyl-sn-glycero-3-phosphate + CoA. The catalysed reaction is sn-glycerol 3-phosphate + (9Z)-octadecenoyl-CoA = 1-(9Z-octadecenoyl)-sn-glycero-3-phosphate + CoA. It carries out the reaction sn-glycerol 3-phosphate + octadecanoyl-CoA = 1-octadecanoyl-sn-glycero-3-phosphate + CoA. It catalyses the reaction sn-glycerol 3-phosphate + hexadecanoyl-CoA = 1-hexadecanoyl-sn-glycero-3-phosphate + CoA. The enzyme catalyses dodecanoyl-CoA + sn-glycerol 3-phosphate = 1-dodecanoyl-sn-glycerol 3-phosphate + CoA. The catalysed reaction is 1-acyl-sn-glycero-3-phospho-(1'-sn-glycerol) + an acyl-CoA = a 1,2-diacyl-sn-glycero-3-phospho-(1'-sn-glycerol) + CoA. The protein operates within phospholipid metabolism; CDP-diacylglycerol biosynthesis; CDP-diacylglycerol from sn-glycerol 3-phosphate: step 1/3. In terms of biological role, mitochondrial membrane protein that catalyzes the essential first step of biosynthesis of glycerolipids such as triglycerides, phosphatidic acids and lysophosphatidic acids. Esterifies acyl-group from acyl-coenzyme A (acyl-CoA) to the sn-1 position of glycerol-3-phosphate, to produce lysophosphatidic acid. Has a narrow hydrophobic binding cleft that selects for a linear acyl chain. Catalytic activity is higher for substrates with a 16-carbon acyl chain. The polypeptide is Glycerol-3-phosphate acyltransferase 1, mitochondrial (Homo sapiens (Human)).